Reading from the N-terminus, the 228-residue chain is 3-dehydroquinate dehydratase (228 aa).

3-dehydroquinate contacts are provided by residues Ser-26, 51–53, and Arg-84; that span reads EIR. Residue His-127 is the Proton donor/acceptor of the active site. The active-site Schiff-base intermediate with substrate is the Lys-150. 3-dehydroquinate-binding residues include Arg-190, Thr-209, and Gln-213.

It belongs to the type-I 3-dehydroquinase family. As to quaternary structure, homodimer.

It catalyses the reaction 3-dehydroquinate = 3-dehydroshikimate + H2O. It functions in the pathway metabolic intermediate biosynthesis; chorismate biosynthesis; chorismate from D-erythrose 4-phosphate and phosphoenolpyruvate: step 3/7. Its function is as follows. Involved in the third step of the chorismate pathway, which leads to the biosynthesis of aromatic amino acids. Catalyzes the cis-dehydration of 3-dehydroquinate (DHQ) and introduces the first double bond of the aromatic ring to yield 3-dehydroshikimate. This is 3-dehydroquinate dehydratase from Thermoplasma acidophilum (strain ATCC 25905 / DSM 1728 / JCM 9062 / NBRC 15155 / AMRC-C165).